The primary structure comprises 323 residues: Fructose-1,6-bisphosphatase class 1 (323 aa).

Mg(2+) contacts are provided by glutamate 88, aspartate 107, leucine 109, and aspartate 110. Residues 110–113 (DGSS) and asparagine 200 contribute to the substrate site. Residue glutamate 272 participates in Mg(2+) binding.

This sequence belongs to the FBPase class 1 family. As to quaternary structure, homotetramer. Mg(2+) is required as a cofactor.

The protein resides in the cytoplasm. It catalyses the reaction beta-D-fructose 1,6-bisphosphate + H2O = beta-D-fructose 6-phosphate + phosphate. Its pathway is carbohydrate biosynthesis; gluconeogenesis. The sequence is that of Fructose-1,6-bisphosphatase class 1 from Acinetobacter baumannii (strain AYE).